We begin with the raw amino-acid sequence, 365 residues long: Probable galacturonosyltransferase-like 10 (365 aa).

Topologically, residues 1 to 10 (MMSGSRLASR) are cytoplasmic. Residues 11 to 31 (LIIIFSIISTSFFTVESIRLF) form a helical; Signal-anchor for type II membrane protein membrane-spanning segment. Topologically, residues 32 to 365 (PDSFDDASSD…LQYNQELEIL (334 aa)) are lumenal. Asn209 is a glycosylation site (N-linked (GlcNAc...) asparagine).

This sequence belongs to the glycosyltransferase 8 family.

It is found in the golgi apparatus membrane. It participates in glycan metabolism; pectin biosynthesis. Its function is as follows. May be involved in pectin and/or xylans biosynthesis in cell walls. In Arabidopsis thaliana (Mouse-ear cress), this protein is Probable galacturonosyltransferase-like 10 (GATL10).